The following is a 210-amino-acid chain: MSTFFKGIKKPFLVTLVLLLVCGLAYPLILTGISQVIFPKQANGSLVIVNGKAIGSALIGQDFTDGRFMKGRPSAVNYNTYIREDKDSGNYAGVGSGSKNYAPTNPELVKRVQEDIDAFLKANPSIKKEDIPTDLLTASGSGLDPHISPESAAVQILALVKSTGLSKDKLETIVKNNTQGKAFGVFGEKTVNVLKVNLDIAKELGLFNKK.

The helical transmembrane segment at 13–33 (LVTLVLLLVCGLAYPLILTGI) threads the bilayer.

This sequence belongs to the KdpC family. In terms of assembly, the system is composed of three essential subunits: KdpA, KdpB and KdpC.

It localises to the cell membrane. Its function is as follows. Part of the high-affinity ATP-driven potassium transport (or Kdp) system, which catalyzes the hydrolysis of ATP coupled with the electrogenic transport of potassium into the cytoplasm. This subunit acts as a catalytic chaperone that increases the ATP-binding affinity of the ATP-hydrolyzing subunit KdpB by the formation of a transient KdpB/KdpC/ATP ternary complex. The sequence is that of Potassium-transporting ATPase KdpC subunit from Clostridium kluyveri (strain ATCC 8527 / DSM 555 / NBRC 12016 / NCIMB 10680 / K1).